Consider the following 91-residue polypeptide: Putative septation protein SpoVG (91 aa).

This sequence belongs to the SpoVG family.

In terms of biological role, could be involved in septation. This chain is Putative septation protein SpoVG, found in Clostridium beijerinckii (strain ATCC 51743 / NCIMB 8052) (Clostridium acetobutylicum).